The sequence spans 87 residues: UPF0250 protein ESA_02696 (87 aa).

This sequence belongs to the UPF0250 family.

The sequence is that of UPF0250 protein ESA_02696 from Cronobacter sakazakii (strain ATCC BAA-894) (Enterobacter sakazakii).